The primary structure comprises 172 residues: Small ribosomal subunit protein uS5 (172 aa).

The S5 DRBM domain maps to 17–80 (LREKMIAVNR…DEARRKMIKV (64 aa)).

Belongs to the universal ribosomal protein uS5 family. In terms of assembly, part of the 30S ribosomal subunit. Contacts proteins S4 and S8.

Its function is as follows. With S4 and S12 plays an important role in translational accuracy. Located at the back of the 30S subunit body where it stabilizes the conformation of the head with respect to the body. The protein is Small ribosomal subunit protein uS5 of Polynucleobacter asymbioticus (strain DSM 18221 / CIP 109841 / QLW-P1DMWA-1) (Polynucleobacter necessarius subsp. asymbioticus).